Here is a 194-residue protein sequence, read N- to C-terminus: UPF0301 protein BQ03640 (194 aa).

This sequence belongs to the UPF0301 (AlgH) family.

In Bartonella quintana (strain Toulouse) (Rochalimaea quintana), this protein is UPF0301 protein BQ03640.